A 69-amino-acid polypeptide reads, in one-letter code: Iota-conotoxin LtIIIA (69 aa).

The first 20 residues, 1–20 (MLKMGVLLFTFLVLFPLTTL), serve as a signal peptide directing secretion. Residues 21 to 52 (ELDTDRPVERHAAIKQDLKPQERRGIRLHAPR) constitute a propeptide that is removed on maturation. Residues Glu54 and Glu57 each carry the 4-carboxyglutamate modification. Disulfide bonds link Cys55-Cys67, Cys56-Cys65, and Cys61-Cys68. Residue Pro58 is modified to 4-hydroxyproline.

Expressed by the venom duct.

It is found in the secreted. In terms of biological role, iota-conotoxins bind to voltage-gated sodium channels and act as agonists by shifting the voltage-dependence of activation to more hyperpolarized levels. This toxin enhances tetrodotoxin-sensitive sodium current in rat dorsal root ganglion neurons. The polypeptide is Iota-conotoxin LtIIIA (Conus litteratus (Lettered cone)).